A 99-amino-acid polypeptide reads, in one-letter code: Plastocyanin (99 aa).

Residues 1–99 (LDVLLGSDDG…AGMVGKVTVN (99 aa)) enclose the Plastocyanin-like domain. His37, Cys84, His87, and Met92 together coordinate Cu cation.

It belongs to the plastocyanin family. Cu(2+) is required as a cofactor.

It is found in the plastid. It localises to the chloroplast thylakoid membrane. Functionally, participates in electron transfer between P700 and the cytochrome b6-f complex in photosystem I. In Mercurialis perennis (Dog's mercury), this protein is Plastocyanin (PETE).